Here is a 114-residue protein sequence, read N- to C-terminus: Iron-sulfur cluster insertion protein ErpA (114 aa).

Residues cysteine 42, cysteine 106, and cysteine 108 each coordinate iron-sulfur cluster.

The protein belongs to the HesB/IscA family. Homodimer. The cofactor is iron-sulfur cluster.

Required for insertion of 4Fe-4S clusters for at least IspG. The protein is Iron-sulfur cluster insertion protein ErpA of Yersinia pseudotuberculosis serotype O:1b (strain IP 31758).